Consider the following 312-residue polypeptide: Ceroid-lipofuscinosis neuronal protein 6 homolog (312 aa).

Residues 1-10 (MEAAARRRQH) are compositionally biased toward basic residues. Residues 1-22 (MEAAARRRQHPGAAGGAGAQPG) are disordered. The next 7 membrane-spanning stretches (helical) occupy residues 57 to 77 (WVLDFGRPIAMLVFPLEWFPL), 82 to 102 (VGDYFHMAYNIITPFLLLKLI), 112 to 132 (SVIYVSIITFVMGASIHLVGD), 178 to 198 (GHCMWYVPFFLILFIYFSGCF), 205 to 225 (SSMPGAALLLAMPSGLYYWYL), 226 to 246 (VTEGQIFILFIFTFFAMLALV), and 261 to 281 (LFLFYSFALTLLLVALWVAWL).

In terms of assembly, interacts with CRMP2. Interacts with CLN5. Interacts with CLN5. Interacts with CLN3.

The protein resides in the endoplasmic reticulum membrane. Its subcellular location is the endoplasmic reticulum. This Canis lupus familiaris (Dog) protein is Ceroid-lipofuscinosis neuronal protein 6 homolog (CLN6).